Consider the following 212-residue polypeptide: Uracil phosphoribosyltransferase (212 aa).

5-phospho-alpha-D-ribose 1-diphosphate is bound by residues R78, R103, and 130 to 138; that span reads DPMLATGGS. Residues I193 and 198–200 contribute to the uracil site; that span reads GDA. D199 contacts 5-phospho-alpha-D-ribose 1-diphosphate.

It belongs to the UPRTase family. Mg(2+) is required as a cofactor.

The enzyme catalyses UMP + diphosphate = 5-phospho-alpha-D-ribose 1-diphosphate + uracil. Its pathway is pyrimidine metabolism; UMP biosynthesis via salvage pathway; UMP from uracil: step 1/1. Its activity is regulated as follows. Allosterically activated by GTP. Its function is as follows. Catalyzes the conversion of uracil and 5-phospho-alpha-D-ribose 1-diphosphate (PRPP) to UMP and diphosphate. This Azotobacter vinelandii (strain DJ / ATCC BAA-1303) protein is Uracil phosphoribosyltransferase.